A 340-amino-acid chain; its full sequence is Glyceraldehyde-3-phosphate dehydrogenase (340 aa).

Residues Ser11–Ile12 and Gly111 contribute to the NAD(+) site. Residue Ser140–Asn142 participates in D-glyceraldehyde 3-phosphate binding. The Nucleophile role is filled by Cys141. Arg169 is an NAD(+) binding site. His195–Gly196 contributes to the D-glyceraldehyde 3-phosphate binding site. Residue Gln303 participates in NAD(+) binding.

It belongs to the glyceraldehyde-3-phosphate dehydrogenase family. In terms of assembly, homotetramer.

The protein localises to the cytoplasm. The catalysed reaction is D-glyceraldehyde 3-phosphate + phosphate + NADP(+) = (2R)-3-phospho-glyceroyl phosphate + NADPH + H(+). It catalyses the reaction D-glyceraldehyde 3-phosphate + phosphate + NAD(+) = (2R)-3-phospho-glyceroyl phosphate + NADH + H(+). It functions in the pathway carbohydrate degradation; glycolysis; pyruvate from D-glyceraldehyde 3-phosphate: step 1/5. This is Glyceraldehyde-3-phosphate dehydrogenase from Methanococcus maripaludis (strain C6 / ATCC BAA-1332).